The chain runs to 649 residues: uncharacterized protein (649 aa).

The protein localises to the nucleus. It localises to the cytoplasm. This is an uncharacterized protein from Schizosaccharomyces pombe (strain 972 / ATCC 24843) (Fission yeast).